The following is a 198-amino-acid chain: Nucleoid occlusion factor SlmA (198 aa).

The region spanning 9 to 70 (RNRREEILQA…SLIEFIEDSL (62 aa)) is the HTH tetR-type domain. A DNA-binding region (H-T-H motif) is located at residues 33 to 52 (TTAKLAANVGVSEAALYRHF). Positions 113 to 144 (ALMFEQDRLQDRINQLFERIESQLRQVLREHK) form a coiled coil.

Belongs to the nucleoid occlusion factor SlmA family. In terms of assembly, homodimer. Interacts with FtsZ.

It is found in the cytoplasm. The protein resides in the nucleoid. Functionally, required for nucleoid occlusion (NO) phenomenon, which prevents Z-ring formation and cell division over the nucleoid. Acts as a DNA-associated cell division inhibitor that binds simultaneously chromosomal DNA and FtsZ, and disrupts the assembly of FtsZ polymers. SlmA-DNA-binding sequences (SBS) are dispersed on non-Ter regions of the chromosome, preventing FtsZ polymerization at these regions. In Pectobacterium carotovorum subsp. carotovorum (strain PC1), this protein is Nucleoid occlusion factor SlmA.